The sequence spans 462 residues: Gamma-glutamylethanolamide synthetase GlnA4 (462 aa).

The 97-residue stretch at 30-126 (GDIDTVVLAF…AVADLAWEDG (97 aa)) folds into the GS beta-grasp domain. One can recognise a GS catalytic domain in the interval 133 to 462 (PRQILRRQLE…WELRRSFERM (330 aa)). Mg(2+)-binding residues include Glu156 and Glu158. Glu214 is a binding site for ATP. Glu219 and Glu226 together coordinate Mg(2+). Gly270 contacts L-glutamate. His274 is a Mg(2+) binding site. 276–278 (HLS) provides a ligand contact to ATP. Residues Arg325 and Arg343 each contribute to the L-glutamate site. Residues Arg343 and Arg348 each coordinate ATP. Position 359 (Glu359) interacts with Mg(2+). Arg361 is a binding site for L-glutamate.

It belongs to the glutamine synthetase family. Mg(2+) serves as cofactor.

The enzyme catalyses ethanolamine + L-glutamate + ATP = gamma-L-glutamylethanolamide + ADP + phosphate + H(+). The protein operates within amine and polyamine degradation; ethanolamine degradation. Very slightly decreased activity with glutamine synthetase (GS) inhibitor methionine sulfoximine (MSO). Involved in the catabolism of monoamine ethanolamine. Catalyzes the ATP-dependent gamma-glutamylation of ethanolamine. No activity with polyamines. No complementation of the L-glutamine auxotrophy of an E.coli glnA mutant. Enables survival of S.coelicolor under high local environmental ethanolamine conditions. May play a role during starvation conditions to limit intracellular ethanolamine concentration, which in excess is toxic to the cells. The polypeptide is Gamma-glutamylethanolamide synthetase GlnA4 (Streptomyces coelicolor (strain ATCC BAA-471 / A3(2) / M145)).